The chain runs to 745 residues: Translation initiation factor IF-2 (745 aa).

The interval 1–154 (MSDKPRRDTG…PAARPVVRPR (154 aa)) is disordered. The segment covering 36–56 (TGRSPNASTGGNRSAGNQAGN) has biased composition (polar residues). Low complexity predominate over residues 68-98 (ATTPAPNRNTPPAGARQGGAANARTGTPPVA). Residues 99 to 113 (RGGGGGVTPPTGRGG) are compositionally biased toward gly residues. The span at 114–126 (NNPRAARNQPRSR) shows a compositional bias: low complexity. The segment covering 127-138 (QQPEEREREHVL) has biased composition (basic and acidic residues). Residues 241–410 (PRPPVVTIMG…LLVADLEDLR (170 aa)) form the tr-type G domain. Positions 250-257 (GHVDHGKT) are G1. 250–257 (GHVDHGKT) serves as a coordination point for GTP. The segment at 275 to 279 (GITQH) is G2. The segment at 296 to 299 (DTPG) is G3. Residues 296 to 300 (DTPGH) and 350 to 353 (NKID) each bind GTP. The G4 stretch occupies residues 350-353 (NKID). The interval 386 to 388 (SAR) is G5.

The protein belongs to the TRAFAC class translation factor GTPase superfamily. Classic translation factor GTPase family. IF-2 subfamily.

The protein localises to the cytoplasm. Functionally, one of the essential components for the initiation of protein synthesis. Protects formylmethionyl-tRNA from spontaneous hydrolysis and promotes its binding to the 30S ribosomal subunits. Also involved in the hydrolysis of GTP during the formation of the 70S ribosomal complex. The polypeptide is Translation initiation factor IF-2 (Chloroflexus aurantiacus (strain ATCC 29366 / DSM 635 / J-10-fl)).